A 218-amino-acid chain; its full sequence is Uracil-DNA glycosylase (218 aa).

The Proton acceptor role is filled by aspartate 68.

The protein belongs to the uracil-DNA glycosylase (UDG) superfamily. UNG family. As to quaternary structure, homodimer. Interacts with protein OPG148. Component of the Uracil-DNA glycosylase(UDG)-OPG148-polymerase complex; OPG148 and UDG form a heterodimeric processivity factor that associates with OPG71 to form the processive polymerase holoenzyme.

It carries out the reaction Hydrolyzes single-stranded DNA or mismatched double-stranded DNA and polynucleotides, releasing free uracil.. In terms of biological role, plays an essential role in viral replication as a component of the DNA polymerase processivity factor. Excises uracil residues from the DNA which can arise as a result of misincorporation of dUMP residues by DNA polymerase or due to deamination of cytosine. The sequence is that of Uracil-DNA glycosylase (OPG116) from Vaccinia virus (strain Ankara) (VACV).